The sequence spans 235 residues: Small ribosomal subunit protein uS3 (235 aa).

The KH type-2 domain occupies 39–107 (VRQFLNKELA…PAQINIAEVK (69 aa)). A compositionally biased stretch (low complexity) spans 215–226 (AQQPEQQPATPK). Residues 215-235 (AQQPEQQPATPKKAPRGKGRK) form a disordered region.

Belongs to the universal ribosomal protein uS3 family. Part of the 30S ribosomal subunit. Forms a tight complex with proteins S10 and S14.

Binds the lower part of the 30S subunit head. Binds mRNA in the 70S ribosome, positioning it for translation. This chain is Small ribosomal subunit protein uS3, found in Histophilus somni (strain 129Pt) (Haemophilus somnus).